The sequence spans 288 residues: 4-diphosphocytidyl-2-C-methyl-D-erythritol kinase (288 aa).

Residue Lys-8 is part of the active site. Residue 90 to 100 participates in ATP binding; the sequence is PLEAGLAGGSA. The active site involves Asp-132.

Belongs to the GHMP kinase family. IspE subfamily.

It catalyses the reaction 4-CDP-2-C-methyl-D-erythritol + ATP = 4-CDP-2-C-methyl-D-erythritol 2-phosphate + ADP + H(+). It participates in isoprenoid biosynthesis; isopentenyl diphosphate biosynthesis via DXP pathway; isopentenyl diphosphate from 1-deoxy-D-xylulose 5-phosphate: step 3/6. Catalyzes the phosphorylation of the position 2 hydroxy group of 4-diphosphocytidyl-2C-methyl-D-erythritol. The sequence is that of 4-diphosphocytidyl-2-C-methyl-D-erythritol kinase from Carboxydothermus hydrogenoformans (strain ATCC BAA-161 / DSM 6008 / Z-2901).